We begin with the raw amino-acid sequence, 301 residues long: Putative carboxypeptidase slr1534 (301 aa).

The Nucleophile role is filled by S116. Active-site charge relay system residues include E206 and H276.

The protein belongs to the peptidase S66 family.

The chain is Putative carboxypeptidase slr1534 from Synechocystis sp. (strain ATCC 27184 / PCC 6803 / Kazusa).